The sequence spans 243 residues: Polycomb group RING finger protein 1 (243 aa).

K12 is covalently cross-linked (Glycyl lysine isopeptide (Lys-Gly) (interchain with G-Cter in SUMO2)). The RING-type zinc-finger motif lies at 35–74; it reads CCLCAGYFVDATTITECLHTFCKSCIVKYLQTSKYCPMCN. The necessary for repressor activity stretch occupies residues 74–231; it reads NIKIHETQPL…LSRWFGKPSP (158 aa). Residue K76 forms a Glycyl lysine isopeptide (Lys-Gly) (interchain with G-Cter in SUMO2) linkage. Residues 138–239 are required for the interaction with the KDM2B-SKP1 heterodimeric complex; it reads LPFTSFDHYY…SPLLLQYSVK (102 aa). The interval 151-239 is RING-finger and WD40-associated ubiquitin-like domain (RAWUL); sufficient for interaction with BCOR and BCORL1; that stretch reads EQLSLCLERL…SPLLLQYSVK (89 aa).

As to quaternary structure, interacts with BCORL1, forming heterodimers. The PCGF1-BCORL1 heterodimeric complex interacts with the KDM2B-SKP1 heterodimeric complex to form a homotetrameric polycomb repression complex 1 (PRC1.1). Component of the repressive BCOR complex containing a Polycomb group subcomplex at least composed of RYBP, RING1 and RNF2/RING2. Specifically interacts with BCOR, RING1 and RNF2/RING2. Component of a PRC1-like complex. Interacts with CBX6, CBX7 and CBX8. Interacts with DPPA4, NANOG, POU5F1 and RYBP. As to expression, highly expressed in brain, cerebellum, heart and testis.

The protein resides in the nucleus. In terms of biological role, component of the Polycomb group (PcG) multiprotein BCOR complex, a complex required to maintain the transcriptionally repressive state of some genes, such as BCL6 and the cyclin-dependent kinase inhibitor, CDKN1A. Transcriptional repressor that may be targeted to the DNA by BCL6; this transcription repressor activity may be related to PKC signaling pathway. Represses CDKN1A expression by binding to its promoter, and this repression is dependent on the retinoic acid response element (RARE element). Promotes cell cycle progression and enhances cell proliferation as well. May have a positive role in tumor cell growth by down-regulating CDKN1A. Component of a Polycomb group (PcG) multiprotein PRC1-like complex, a complex class required to maintain the transcriptionally repressive state of many genes, including Hox genes, throughout development. PcG PRC1 complex acts via chromatin remodeling and modification of histones; it mediates monoubiquitination of histone H2A 'Lys-119', rendering chromatin heritably changed in its expressibility. Within the PRC1-like complex, regulates RNF2 ubiquitin ligase activity. Regulates the expression of DPPA4 and NANOG in the NT2 embryonic carcinoma cells. This Rattus norvegicus (Rat) protein is Polycomb group RING finger protein 1 (Pcgf1).